The primary structure comprises 973 residues: FHF complex subunit HOOK-interacting protein 1B (973 aa).

Disordered stretches follow at residues 466 to 493, 510 to 547, and 573 to 647; these read SSPSRPEHASWARGPGSPSVDSSSVVTV, SLGGSESPAPAPRSPGLATSPASSPGRRPSPVEEPGEL, and SAPY…EGAK. Position 467 is a phosphoserine (Ser467). Positions 482 to 493 are enriched in low complexity; that stretch reads SPSVDSSSVVTV. Phosphoserine occurs at positions 510, 523, 529, and 533. 2 stretches are compositionally biased toward low complexity: residues 529–538 and 622–639; these read SPASSPGRRP and GARESLGHLPPPQLNGLP. Phosphoserine is present on residues Ser859 and Ser898.

It belongs to the FHIP family. As to quaternary structure, component of the FTS/Hook/FHIP complex (FHF complex), composed of AKTIP/FTS, FHIP1B, and one or more members of the Hook family of proteins HOOK1, HOOK2, and HOOK3. The FHF complex associates with the homotypic vesicular sorting complex (the HOPS complex).

Functionally, component of the FTS/Hook/FHIP complex (FHF complex). The FHF complex may function to promote vesicle trafficking and/or fusion via the homotypic vesicular protein sorting complex (the HOPS complex). FHF complex promotes the distribution of AP-4 complex to the perinuclear area of the cell. In Bos taurus (Bovine), this protein is FHF complex subunit HOOK-interacting protein 1B (FHIP1B).